The sequence spans 97 residues: Protein RnfH (97 aa).

Belongs to the UPF0125 (RnfH) family.

This chain is Protein RnfH, found in Halorhodospira halophila (strain DSM 244 / SL1) (Ectothiorhodospira halophila (strain DSM 244 / SL1)).